A 269-amino-acid polypeptide reads, in one-letter code: Type II iodothyronine deiodinase (269 aa).

The Lumenal segment spans residues 1 to 9; the sequence is MGILSVDLL. Residues 10-34 traverse the membrane as a helical; Signal-anchor for type III membrane protein segment; it reads ITLQILPVFFSNCLFLALYDSVILL. Topologically, residues 35–269 are cytoplasmic; the sequence is KHVVLLLSRS…KNFSKRUKKT (235 aa). Sec133 is a catalytic residue. 2 non-standard amino acids (selenocysteine) are found at residues Sec133 and Sec266.

Belongs to the iodothyronine deiodinase family. In terms of assembly, predominantly monomer. Can form homodimers but homodimerization is not essential for enzyme activity. Interacts with USP20 and USP33. Interacts with MARCHF6. Ubiquitinated by MARCHF6, leading to its degradation by the proteasome. Deubiquitinated by USP20 and USP33. In terms of tissue distribution, more expressed in pituitary than in brain, low to undetectable levels in thyroid and skeletal muscle.

The protein localises to the endoplasmic reticulum membrane. It carries out the reaction 3,3',5-triiodo-L-thyronine + iodide + A + H(+) = L-thyroxine + AH2. The catalysed reaction is 3,3'-diiodo-L-thyronine + iodide + A + H(+) = 3,3',5'-triiodo-L-thyronine + AH2. It catalyses the reaction 3'-iodo-L-thyronine + iodide + A + H(+) = 3',5'-diiodo-L-thyronine + AH2. The enzyme catalyses 3,3'-diiodothyronamine + iodide + A + H(+) = 3,3',5'-triiodothyronamine + AH2. It carries out the reaction 3'-iodothyronamine + iodide + A + H(+) = 3',5'-diiodothyronamine + AH2. Plays a crucial role in the metabolism of thyroid hormones (TH) and has specific roles in TH activation and inactivation by deiodination.Catalyzes the deiodination of L-thyroxine (T4) to 3,5,3'-triiodothyronine (T3) and 3,3',5'-triiodothyronine (rT3) to 3,3'-diiodothyronine (3,3'-T2) via outer-ring deiodination (ORD). Catalyzes the deiodination of 3',5'-diiodothyronine (3',5'-T2) to 3'-monoiodothyronine (3'-T1) via ORD. Catalyzes the phenolic ring deiodinations of 3,3',5'-triiodothyronamine and 3',5'- diiodothyronamine. This chain is Type II iodothyronine deiodinase (DIO2), found in Sus scrofa (Pig).